The chain runs to 314 residues: 4-hydroxy-3-methylbut-2-enyl diphosphate reductase (314 aa).

Cys12 provides a ligand contact to [4Fe-4S] cluster. 2 residues coordinate (2E)-4-hydroxy-3-methylbut-2-enyl diphosphate: His41 and His74. Dimethylallyl diphosphate contacts are provided by His41 and His74. His41 and His74 together coordinate isopentenyl diphosphate. Cys96 provides a ligand contact to [4Fe-4S] cluster. Residue His124 participates in (2E)-4-hydroxy-3-methylbut-2-enyl diphosphate binding. His124 lines the dimethylallyl diphosphate pocket. His124 is a binding site for isopentenyl diphosphate. Glu126 (proton donor) is an active-site residue. Thr168 is a (2E)-4-hydroxy-3-methylbut-2-enyl diphosphate binding site. Cys198 serves as a coordination point for [4Fe-4S] cluster. (2E)-4-hydroxy-3-methylbut-2-enyl diphosphate-binding residues include Ser226, Ser227, Asn228, and Ser270. Positions 226, 227, 228, and 270 each coordinate dimethylallyl diphosphate. Residues Ser226, Ser227, Asn228, and Ser270 each contribute to the isopentenyl diphosphate site.

It belongs to the IspH family. It depends on [4Fe-4S] cluster as a cofactor.

It carries out the reaction isopentenyl diphosphate + 2 oxidized [2Fe-2S]-[ferredoxin] + H2O = (2E)-4-hydroxy-3-methylbut-2-enyl diphosphate + 2 reduced [2Fe-2S]-[ferredoxin] + 2 H(+). The catalysed reaction is dimethylallyl diphosphate + 2 oxidized [2Fe-2S]-[ferredoxin] + H2O = (2E)-4-hydroxy-3-methylbut-2-enyl diphosphate + 2 reduced [2Fe-2S]-[ferredoxin] + 2 H(+). It participates in isoprenoid biosynthesis; dimethylallyl diphosphate biosynthesis; dimethylallyl diphosphate from (2E)-4-hydroxy-3-methylbutenyl diphosphate: step 1/1. The protein operates within isoprenoid biosynthesis; isopentenyl diphosphate biosynthesis via DXP pathway; isopentenyl diphosphate from 1-deoxy-D-xylulose 5-phosphate: step 6/6. Catalyzes the conversion of 1-hydroxy-2-methyl-2-(E)-butenyl 4-diphosphate (HMBPP) into a mixture of isopentenyl diphosphate (IPP) and dimethylallyl diphosphate (DMAPP). Acts in the terminal step of the DOXP/MEP pathway for isoprenoid precursor biosynthesis. The chain is 4-hydroxy-3-methylbut-2-enyl diphosphate reductase from Pseudomonas fluorescens (strain Pf0-1).